A 763-amino-acid chain; its full sequence is ATP-dependent RNA helicase SUV3 homolog, mitochondrial (763 aa).

The N-terminal 43 residues, 1–43, are a transit peptide targeting the mitochondrion; sequence MQNCRRCISLTGLLRMTLYLRPSFSIDLSLRRLHRAAFLFSRK. The 141-residue stretch at 181-321 folds into the Helicase ATP-binding domain; it reads NARAITRKIV…ALDLLQKICE (141 aa). Position 194 to 201 (194 to 201) interacts with ATP; that stretch reads GPTNSGKT. The region spanning 330–508 is the Helicase C-terminal domain; sequence RLYDRLTELT…PTADQIELYA (179 aa). Residues 724-763 are disordered; that stretch reads AQQLGKSNSQSNENSEPVVNSDDEDNYSGIGRKTRKKRRK. Positions 727 to 741 are enriched in polar residues; it reads LGKSNSQSNENSEPV.

The protein belongs to the helicase family. Mg(2+) is required as a cofactor. It depends on Mn(2+) as a cofactor.

The protein localises to the mitochondrion. The enzyme catalyses ATP + H2O = ADP + phosphate + H(+). Functionally, major helicase player in mitochondrial RNA metabolism and maintenance. Likely component of the mitochondrial degradosome (mtEXO) complex, that degrades 3' overhang double-stranded RNA with a 3'-to-5' directionality in an ATP-dependent manner. ATPase and ATP-dependent multisubstrate helicase, able to unwind double-stranded (ds) DNA and RNA, and RNA/DNA heteroduplexes in the 5'-to-3' direction. Regulates mRNA stability and is required for the correct processing and maturation of mitochondrial transcripts. This Drosophila melanogaster (Fruit fly) protein is ATP-dependent RNA helicase SUV3 homolog, mitochondrial.